Consider the following 77-residue polypeptide: UPF0401 protein ECP_3010 (77 aa).

Belongs to the UPF0401 family.

This is UPF0401 protein ECP_3010 from Escherichia coli O6:K15:H31 (strain 536 / UPEC).